The following is a 283-amino-acid chain: Pantothenate synthetase (283 aa).

30-37 provides a ligand contact to ATP; the sequence is MGYLHEGH. H37 acts as the Proton donor in catalysis. Q61 serves as a coordination point for (R)-pantoate. Q61 is a binding site for beta-alanine. Position 147–150 (147–150) interacts with ATP; sequence GQKD. Q153 contacts (R)-pantoate. ATP contacts are provided by residues V176 and 184 to 187; that span reads MSSR.

It belongs to the pantothenate synthetase family. As to quaternary structure, homodimer.

Its subcellular location is the cytoplasm. It carries out the reaction (R)-pantoate + beta-alanine + ATP = (R)-pantothenate + AMP + diphosphate + H(+). The protein operates within cofactor biosynthesis; (R)-pantothenate biosynthesis; (R)-pantothenate from (R)-pantoate and beta-alanine: step 1/1. In terms of biological role, catalyzes the condensation of pantoate with beta-alanine in an ATP-dependent reaction via a pantoyl-adenylate intermediate. This is Pantothenate synthetase from Thermoanaerobacter pseudethanolicus (strain ATCC 33223 / 39E) (Clostridium thermohydrosulfuricum).